Here is a 545-residue protein sequence, read N- to C-terminus: Hydroxylamine reductase (545 aa).

[4Fe-4S] cluster is bound by residues Cys-3, Cys-6, Cys-15, and Cys-21. Residues His-240, Glu-264, Cys-309, Cys-401, Cys-429, Cys-454, Glu-488, and Lys-490 each contribute to the hybrid [4Fe-2O-2S] cluster site. Cys-401 carries the post-translational modification Cysteine persulfide.

It belongs to the HCP family. Requires [4Fe-4S] cluster as cofactor. Hybrid [4Fe-2O-2S] cluster is required as a cofactor.

It localises to the cytoplasm. It catalyses the reaction A + NH4(+) + H2O = hydroxylamine + AH2 + H(+). In terms of biological role, catalyzes the reduction of hydroxylamine to form NH(3) and H(2)O. This is Hydroxylamine reductase from Rippkaea orientalis (strain PCC 8801 / RF-1) (Cyanothece sp. (strain PCC 8801)).